The chain runs to 207 residues: Thiamine-phosphate synthase (207 aa).

4-amino-2-methyl-5-(diphosphooxymethyl)pyrimidine contacts are provided by residues 36–40 (QLRMK) and N68. Residues D69 and D88 each contribute to the Mg(2+) site. Residue S106 coordinates 4-amino-2-methyl-5-(diphosphooxymethyl)pyrimidine. Residue 132 to 134 (TNT) coordinates 2-[(2R,5Z)-2-carboxy-4-methylthiazol-5(2H)-ylidene]ethyl phosphate. K135 contributes to the 4-amino-2-methyl-5-(diphosphooxymethyl)pyrimidine binding site. Residues G162 and 182 to 183 (VS) contribute to the 2-[(2R,5Z)-2-carboxy-4-methylthiazol-5(2H)-ylidene]ethyl phosphate site.

This sequence belongs to the thiamine-phosphate synthase family. Mg(2+) serves as cofactor.

It catalyses the reaction 2-[(2R,5Z)-2-carboxy-4-methylthiazol-5(2H)-ylidene]ethyl phosphate + 4-amino-2-methyl-5-(diphosphooxymethyl)pyrimidine + 2 H(+) = thiamine phosphate + CO2 + diphosphate. The enzyme catalyses 2-(2-carboxy-4-methylthiazol-5-yl)ethyl phosphate + 4-amino-2-methyl-5-(diphosphooxymethyl)pyrimidine + 2 H(+) = thiamine phosphate + CO2 + diphosphate. The catalysed reaction is 4-methyl-5-(2-phosphooxyethyl)-thiazole + 4-amino-2-methyl-5-(diphosphooxymethyl)pyrimidine + H(+) = thiamine phosphate + diphosphate. It participates in cofactor biosynthesis; thiamine diphosphate biosynthesis; thiamine phosphate from 4-amino-2-methyl-5-diphosphomethylpyrimidine and 4-methyl-5-(2-phosphoethyl)-thiazole: step 1/1. In terms of biological role, condenses 4-methyl-5-(beta-hydroxyethyl)thiazole monophosphate (THZ-P) and 2-methyl-4-amino-5-hydroxymethyl pyrimidine pyrophosphate (HMP-PP) to form thiamine monophosphate (TMP). This chain is Thiamine-phosphate synthase, found in Methanococcus maripaludis (strain C6 / ATCC BAA-1332).